The primary structure comprises 662 residues: Pro-neuregulin-1, membrane-bound isoform (662 aa).

A propeptide spanning residues 1–13 (MSERKEGRGKGKG) is cleaved from the precursor. Residues 1-52 (MSERKEGRGKGKGKKKDRGSRGKPGPAEGDPSPALPPRLKEMKSQESAAGSK) are disordered. The Extracellular segment spans residues 14–265 (KKKDRGSRGK…SKAEELYQKR (252 aa)). The Ig-like C2-type domain occupies 37–128 (PRLKEMKSQE…GNDSASANIT (92 aa)). Cysteine 57 and cysteine 112 are joined by a disulfide. N-linked (GlcNAc...) asparagine glycans are attached at residues asparagine 120, asparagine 126, and asparagine 164. The EGF-like domain maps to 178-222 (HLIKCAEKEKTFCVNGGECFTVKDLSNPSRYLCKCPNEFTGDRCQ). 3 disulfide bridges follow: cysteine 182–cysteine 196, cysteine 190–cysteine 210, and cysteine 212–cysteine 221. A helical membrane pass occupies residues 266-288 (VLTITGICIALLVVGIMCVVAYC). At 289 to 662 (KTKKQRQKLH…VIANQDPIAV (374 aa)) the chain is on the cytoplasmic side. The segment covering 358-373 (SHYTSTAHHSTTVTQT) has biased composition (low complexity). Disordered stretches follow at residues 358-383 (SHYTSTAHHSTTVTQTPSHSWSNGHT), 398-480 (SVEN…PVSS), and 547-610 (YETT…DTPF). Over residues 374 to 383 (PSHSWSNGHT) the composition is skewed to polar residues. Positions 410–420 (GPRGRLHGLGG) are enriched in gly residues. Basic and acidic residues predominate over residues 425–445 (SFLRHARETPDSYRDSPHSER). Residues 564–574 (TNSRRAKRTKP) are compositionally biased toward basic residues. Residues 585–596 (DSNTSSVSSNSE) are compositionally biased toward low complexity.

Belongs to the neuregulin family. The cytoplasmic domain interacts with the LIM domain region of LIMK1. Forms a ternary complex with ERBB3 and ITGAV:ITGB3 or ITGA6:ITGB4. Interacts with NRDC and BACE1. Proteolytic cleavage close to the plasma membrane on the external face leads to the release of the soluble growth factor form. In terms of processing, N- and O-glycosylated. Extensive glycosylation precedes the proteolytic cleavage. In terms of tissue distribution, widely expressed. Most tissues contain isoform alpha2A and isoform alpha2B. Isoform Alpha2 and isoform beta2 are the predominant forms in mesenchymal and non-neuronal organs. Isoform Beta1 is enriched in brain and spinal cord, but not in muscle and heart. Isoform Alpha2C is highly expressed in spinal cord, moderately in lung, brain, ovary, and stomach, in low amounts in the kidney, skin and heart and not detected in the liver, spleen, and placenta.

It is found in the cell membrane. The protein localises to the secreted. Functionally, direct ligand for ERBB3 and ERBB4 tyrosine kinase receptors. Concomitantly recruits ERBB1 and ERBB2 coreceptors, resulting in ligand-stimulated tyrosine phosphorylation and activation of the ERBB receptors. The multiple isoforms perform diverse functions such as inducing growth and differentiation of epithelial, glial, neuronal, and skeletal muscle cells; inducing expression of acetylcholine receptor in synaptic vesicles during the formation of the neuromuscular junction; stimulating lobuloalveolar budding and milk production in the mammary gland and inducing differentiation of mammary tumor cells; stimulating Schwann cell proliferation; implication in the development of the myocardium such as trabeculation of the developing heart. Binds to ERBB4 and ERBB3. Acts as a ligand for integrins and binds (via EGF domain) to integrins ITGAV:ITGB3 or ITGA6:ITGB4. Its binding to integrins and subsequent ternary complex formation with integrins and ERRB3 are essential for NRG1-ERBB signaling. Induces the phosphorylation and activation of MAPK3/ERK1, MAPK1/ERK2 and AKT1, and ligand-dependent ERBB4 endocytosis is essential for the NRG1-mediated activation of these kinases in neurons. This Rattus norvegicus (Rat) protein is Pro-neuregulin-1, membrane-bound isoform (Nrg1).